Consider the following 1337-residue polypeptide: Activated Cdc42 kinase-like (1337 aa).

Ser71 is subject to Phosphoserine. The region spanning 133–399 is the Protein kinase domain; the sequence is ISVNKQLGTG…GEIYDQLPDM (267 aa). Residues 139–147 and Lys164 each bind ATP; that span reads LGTGEFGIV. Asp260 acts as the Proton acceptor in catalysis. Tyr291 and Tyr292 each carry phosphotyrosine. Residues 399 to 460 enclose the SH3 domain; sequence MKPEQLKAVV…NPSNTVAFLE (62 aa). Positions 488 to 502 constitute a CRIB domain; that stretch reads ISKPQNDFKHTGHVG. Residues 714–739 are disordered; that stretch reads SGDTNGNKHGHGLLPTLSKKKSSGTV. Ser764 and Ser778 each carry phosphoserine. Positions 786–822 are disordered; the sequence is RFPHLSNNGSGDKSGGLGTSGSAHTPTHGNASPFPKK. The segment covering 805-815 has biased composition (polar residues); sequence SGSAHTPTHGN. 3 positions are modified to phosphoserine: Ser831, Ser918, and Ser924. Disordered stretches follow at residues 906 to 969 and 1024 to 1045; these read AGLS…TSTK and PSGMRRPSRPSEREYENMPTVG. Positions 947–957 are enriched in pro residues; sequence PESPNPIPLPP.

This sequence belongs to the protein kinase superfamily. Tyr protein kinase family.

It catalyses the reaction L-tyrosyl-[protein] + ATP = O-phospho-L-tyrosyl-[protein] + ADP + H(+). In terms of biological role, likely to act as a downstream effector of Cdc42 during dorsal closure, acting in a kinase independent manner with the other ACK family member Ack to positively regulate expression of the myosin zip by promoting the endocytosis of Egfr in the amnioserosa (AS). This is Activated Cdc42 kinase-like from Drosophila melanogaster (Fruit fly).